A 557-amino-acid chain; its full sequence is Nucleolin 1 (557 aa).

3 disordered regions span residues 1-297, 376-398, and 474-557; these read MGKS…GGSK, GERGERPAFTPQSGNFRSGGDGG, and LVVD…FGDE. Positions 49-63 are enriched in basic and acidic residues; sequence QKEKAVKKVPKKVES. Acidic residues-rich tracts occupy residues 64 to 74, 91 to 101, and 124 to 135; these read SDDSDSESEEE, ESSDDSSSDDE, and SSSDDDSSDEEV. Over residues 174–184 the composition is skewed to low complexity; sequence AKIAKPAAKDS. Residues 186 to 197 are compositionally biased toward acidic residues; sequence SSDDDSDEDSED. The segment covering 203 to 217 has biased composition (low complexity); that stretch reads KKAAPAAAKAASSSD. Residues 218-229 are compositionally biased toward acidic residues; sequence SSDEDSDEESED. Residues 230-247 are compositionally biased toward basic and acidic residues; it reads EKPAQKKADTKASKKSSS. Over residues 249 to 263 the composition is skewed to acidic residues; sequence ESSESEEDESEDEEE. The segment covering 264-281 has biased composition (basic and acidic residues); the sequence is TPKKKSSDVEMVDAEKSS. The RRM 1 domain occupies 297 to 374; it reads KTLFAANLSF…REIRLDIAQE (78 aa). The 81-residue stretch at 401-481 folds into the RRM 2 domain; the sequence is KKIFVKGFDA…FYLVVDEPRP (81 aa). Gly residues predominate over residues 485–503; sequence SSGGGGFGRGNGRFGSGGG.

In terms of assembly, interacts with THAL in the nucleus. In terms of tissue distribution, expressed in roots, leaves, shoots and flowers.

The protein localises to the nucleus. It localises to the nucleolus. Involved in pre-rRNA processing and ribosome assembly. Is associated with intranucleolar chromatin and pre-ribosomal particles and plays a role in controlling activation and repression of a specific subset of rRNA genes located in distinctive nucleolar organizer regions. Binds specifically rDNA chromatin and may be required to maintain rDNA chromatin structure, but is probably not required for the overall histone methylation status of 45S rRNA genes. Involved in leaf polarity establishment by functioning cooperatively with AS1 to repress abaxial genes ARF3, ARF4, KAN1, KAN2, YAB1 and YAB5, and the knox homeobox genes KNAT1, KNAT2, KNAT6, and STM to promote adaxial development in leaf primordia at shoot apical meristems at high temperatures. The polypeptide is Nucleolin 1 (Arabidopsis thaliana (Mouse-ear cress)).